The chain runs to 71 residues: Large ribosomal subunit protein uL29 (71 aa).

This sequence belongs to the universal ribosomal protein uL29 family.

This chain is Large ribosomal subunit protein uL29, found in Rickettsia massiliae (strain Mtu5).